Reading from the N-terminus, the 247-residue chain is MLSSSDSKVEPALKKQKYQDKAIDLDKSEEFDKFFLDFNQNQIYQNNSRDLGEQYEPPSNAEPNDLNEEINKALSTFNEFNQTNSIKLSFKNEANSSATESSSPMDSPGTLTSSVTSNDEEVYADDSKQNPSHRISNVQSNSDDQASMTNMVNQSTLTSIKQSMINTSKLISTFTTLKTTYLKLCKEFNYLLNKFKDNEKIKIELINENNELKHLLMEIIKQRELEKSTTRHTTPISNSRKRKCPSS.

Disordered stretches follow at residues 95-146 (NSSA…DDQA) and 226-247 (EKST…CPSS). Polar residues predominate over residues 129-146 (QNPSHRISNVQSNSDDQA).

The protein resides in the cytoplasm. It is found in the nucleus. Functionally, involved in cation homeostasis and in the regulation of the cation stress signaling cascades. The polypeptide is Protein ATC1/LIC4 (ATC1) (Debaryomyces hansenii (strain ATCC 36239 / CBS 767 / BCRC 21394 / JCM 1990 / NBRC 0083 / IGC 2968) (Yeast)).